The primary structure comprises 289 residues: Serine/threonine-protein phosphatase Pgam5, mitochondrial (289 aa).

The helical transmembrane segment at 7 to 23 threads the bilayer; sequence LVCGAGAGLAAFYLSRL.

Belongs to the phosphoglycerate mutase family. BPG-dependent PGAM subfamily. In terms of assembly, interacts with Pk92B/ASK1.

Its subcellular location is the mitochondrion outer membrane. It carries out the reaction O-phospho-L-seryl-[protein] + H2O = L-seryl-[protein] + phosphate. The catalysed reaction is O-phospho-L-threonyl-[protein] + H2O = L-threonyl-[protein] + phosphate. Displays phosphatase activity for serine/threonine residues, and dephosphorylates and activates Pk92B kinase. Has apparently no phosphoglycerate mutase activity. The polypeptide is Serine/threonine-protein phosphatase Pgam5, mitochondrial (Drosophila ananassae (Fruit fly)).